Here is a 598-residue protein sequence, read N- to C-terminus: NADH-ubiquinone oxidoreductase chain 5 (598 aa).

14 consecutive transmembrane segments (helical) span residues 6-26 (LTLIMNSGALLTIIVLLPPII), 32-52 (MILTTKLVKISMFISLIPLTI), 84-100 (YTVIFTPIALMITWSIM), 113-133 (MDKFFKYLLLFLITMITFISA), 136-156 (LLQLFIGWEGVGIMSFLLISW), 241-261 (TPVSALLHSSTMVVAGVFLLI), 272-292 (LMLEMTLCLGAMTTICAALCA), 301-320 (IIAFSTSSQLGLMMVAVGLN), 325-347 (AFLHMCTHAFFKAMLFLCSGSII), 370-390 (TTCMTIGSAALMGLPFLAGFF), 409-429 (LMVTLMAVTLTTAYSSRLIIM), 456-476 (LAWGSLISGLILTSTLPPMKP), 478-498 (IFTMPTYIKTIALMMFIISLI), and 576-596 (LNSATLPLMAFALTLITLSLT).

It belongs to the complex I subunit 5 family.

It localises to the mitochondrion inner membrane. It carries out the reaction a ubiquinone + NADH + 5 H(+)(in) = a ubiquinol + NAD(+) + 4 H(+)(out). Functionally, core subunit of the mitochondrial membrane respiratory chain NADH dehydrogenase (Complex I) that is believed to belong to the minimal assembly required for catalysis. Complex I functions in the transfer of electrons from NADH to the respiratory chain. The immediate electron acceptor for the enzyme is believed to be ubiquinone. This Petromyzon marinus (Sea lamprey) protein is NADH-ubiquinone oxidoreductase chain 5 (MT-ND5).